The sequence spans 146 residues: D-aminoacyl-tRNA deacylase (146 aa).

Residues 137-138 carry the Gly-cisPro motif, important for rejection of L-amino acids motif; the sequence is GP.

Belongs to the DTD family. Homodimer.

The protein localises to the cytoplasm. It catalyses the reaction glycyl-tRNA(Ala) + H2O = tRNA(Ala) + glycine + H(+). The catalysed reaction is a D-aminoacyl-tRNA + H2O = a tRNA + a D-alpha-amino acid + H(+). An aminoacyl-tRNA editing enzyme that deacylates mischarged D-aminoacyl-tRNAs. Also deacylates mischarged glycyl-tRNA(Ala), protecting cells against glycine mischarging by AlaRS. Acts via tRNA-based rather than protein-based catalysis; rejects L-amino acids rather than detecting D-amino acids in the active site. By recycling D-aminoacyl-tRNA to D-amino acids and free tRNA molecules, this enzyme counteracts the toxicity associated with the formation of D-aminoacyl-tRNA entities in vivo and helps enforce protein L-homochirality. This chain is D-aminoacyl-tRNA deacylase, found in Psychrobacter sp. (strain PRwf-1).